A 441-amino-acid chain; its full sequence is Asparagine--tRNA ligase, mitochondrial (441 aa).

This sequence belongs to the class-II aminoacyl-tRNA synthetase family.

Its subcellular location is the mitochondrion. The catalysed reaction is tRNA(Asn) + L-asparagine + ATP = L-asparaginyl-tRNA(Asn) + AMP + diphosphate + H(+). The polypeptide is Asparagine--tRNA ligase, mitochondrial (slm5) (Schizosaccharomyces pombe (strain 972 / ATCC 24843) (Fission yeast)).